Here is a 408-residue protein sequence, read N- to C-terminus: Potassium channel subfamily K member 13 (408 aa).

Topologically, residues 1–19 (MAGRGFSWGPGHLNEDNAR) are cytoplasmic. The chain crosses the membrane as a helical span at residues 20-40 (FLLLAALIVLYLLGGAAVFSA). Residues N59 and N65 are each glycosylated (N-linked (GlcNAc...) asparagine). The pore-forming intramembrane region spans 95 to 115 (WDFTGAFYFVGTVVSTIGFGM). K(+) is bound by residues T110, I111, and G112. The interval 110–115 (TIGFGM) is selectivity filter 1. Residues 125 to 145 (IFLIFYGLVGCSSTILFFNLF) form a helical membrane-spanning segment. Residues 146-193 (LERLITIIAYIMKSCHQRQLRRRGALPQESLKDAGQCEVDSLAGWKPS) are Cytoplasmic-facing. Residues 194 to 214 (VYYVMLILCTASILISCCASA) traverse the membrane as a helical segment. The pore-forming intramembrane region spans 224–244 (YFDSLYFCFVAFSTIGFGDLV). K(+) is bound by residues T237, I238, G239, and F240. The segment at 237 to 242 (TIGFGD) is selectivity filter 2. Residues 263 to 283 (VFILMGVCCIYSLFNVISILI) form a helical membrane-spanning segment. Over 284–408 (KQSLNWILRK…NRLAETSGDR (125 aa)) the chain is Cytoplasmic.

Belongs to the two pore domain potassium channel (TC 1.A.1.8) family. In terms of assembly, homodimer. Heterodimer with KCNK12. In terms of tissue distribution, expressed in microglia (at protein level).

Its subcellular location is the cell membrane. It catalyses the reaction K(+)(in) = K(+)(out). Its activity is regulated as follows. The channel conductance is activated by arachidonic acid and inhibited by Ba(2+) ions, volatile anesthetics such as halothane and antiarrhythmic drugs mexiletine and lidocaine. Insensitive to extracellular pH change. In terms of biological role, k(+) channel that conducts outward rectifying tonic currents potentiated by purinergic signals. Homo- and heterodimerizes to form functional channels with distinct regulatory and gating properties. Contributes most of K(+) currents at the plasma membrane of resting microglia. Maintains a depolarized membrane potential required for proper ramified microglia morphology and phagocytosis, selectively mediating microglial pruning of presynaptic compartments at hippocampal excitatory synapses. Upon local release of ATP caused by neuronal injury or infection, it is potentiated by P2RY12 and P2RX7 receptor signaling and contributes to ATP-triggered K(+) efflux underlying microglial NLRP3 inflammasome assembly and IL1B release. The sequence is that of Potassium channel subfamily K member 13 from Homo sapiens (Human).